The chain runs to 419 residues: MAGSGCAWGAEPPRFLEAFGRLWQVQSRLGSGSSASVYRVRCCGNPGSPPGALKQFLPPGTTGAAASAAEYGFRKERAALEQLQGHRNIVTLYGVFTIHFSPNVPSRCLLLELLDVSVSELLLYSSHQGCSMWMIQHCARDVLEALAFLHHEGYVHADLKPRNILWSAENECFKLIDFGLSFKEGNQDVKYIQTDGYRAPEAELQNCLAQAGLQSDTECTSAVDLWSLGIILLEMFSGMKLKHTVRSQEWKANSSAIIDHIFASKAVVNAAIPAYHLRDLIKSMLHDDPSRRIPAEMALCSPFFSIPFAPHIEDLVMLPTPVLRLLNVLDDDYLENEEEYEDVVEDVKEECQKYGPVVSLLVPKENPGRGQVFVEYANAGDSKAAQKLLTGRMFDGKFVVATFYPLSAYKRGYLYQTLL.

Residues 23–304 (WQVQSRLGSG…AEMALCSPFF (282 aa)) enclose the Protein kinase domain. Residues 29–37 (LGSGSSASV) and K54 contribute to the ATP site. Catalysis depends on proton acceptor residues D141 and D158. The 83-residue stretch at 324–406 (RLLNVLDDDY…KFVVATFYPL (83 aa)) folds into the RRM domain.

The protein belongs to the protein kinase superfamily. Ser/Thr protein kinase family. In terms of assembly, interacts with stathmin, PAM and CDKN1B/p27Kip1.

The protein localises to the nucleus. It catalyses the reaction L-seryl-[protein] + ATP = O-phospho-L-seryl-[protein] + ADP + H(+). It carries out the reaction L-threonyl-[protein] + ATP = O-phospho-L-threonyl-[protein] + ADP + H(+). Upon serum stimulation, phosphorylates CDKN1B/p27Kip1, thus controlling CDKN1B subcellular location and cell cycle progression in G1 phase. May be involved in trafficking and/or processing of RNA. The sequence is that of Serine/threonine-protein kinase Kist (UHMK1) from Pongo abelii (Sumatran orangutan).